The primary structure comprises 75 residues: Putative membrane protein insertion efficiency factor (75 aa).

This sequence belongs to the UPF0161 family.

The protein resides in the cell membrane. Could be involved in insertion of integral membrane proteins into the membrane. The polypeptide is Putative membrane protein insertion efficiency factor (Halalkalibacterium halodurans (strain ATCC BAA-125 / DSM 18197 / FERM 7344 / JCM 9153 / C-125) (Bacillus halodurans)).